A 396-amino-acid chain; its full sequence is Subtilisin-like protease 5 (396 aa).

A signal peptide spans 1-20; it reads MTGFLTILSLSLAALSVTNA. A propeptide spanning residues 21-116 is cleaved from the precursor; sequence AQILSVPQGA…VEPDAIIKQH (96 aa). The Inhibitor I9 domain maps to 37 to 114; the sequence is YIVVMKDDTS…AFVEPDAIIK (78 aa). Residues 125–396 enclose the Peptidase S8 domain; it reads PWGLSRLSNR…SRLLYNGSGR (272 aa). Residues Asp156 and His187 each act as charge relay system in the active site. Asn230 and Asn248 each carry an N-linked (GlcNAc...) asparagine glycan. Ser342 serves as the catalytic Charge relay system. The tract at residues 376–396 is disordered; it reads PTIRNPGPDTTSRLLYNGSGR. Residue Asn392 is glycosylated (N-linked (GlcNAc...) asparagine).

This sequence belongs to the peptidase S8 family.

The protein localises to the secreted. Secreted subtilisin-like serine protease with keratinolytic activity that contributes to pathogenicity. The sequence is that of Subtilisin-like protease 5 (SUB5) from Arthroderma gypseum (strain ATCC MYA-4604 / CBS 118893) (Microsporum gypseum).